The chain runs to 630 residues: tRNA uridine 5-carboxymethylaminomethyl modification enzyme MnmG (630 aa).

Residue Gly13–Gly18 participates in FAD binding. Gly273–Phe287 lines the NAD(+) pocket.

Belongs to the MnmG family. In terms of assembly, homodimer. Heterotetramer of two MnmE and two MnmG subunits. It depends on FAD as a cofactor.

It localises to the cytoplasm. NAD-binding protein involved in the addition of a carboxymethylaminomethyl (cmnm) group at the wobble position (U34) of certain tRNAs, forming tRNA-cmnm(5)s(2)U34. The chain is tRNA uridine 5-carboxymethylaminomethyl modification enzyme MnmG from Pseudomonas putida (strain ATCC 700007 / DSM 6899 / JCM 31910 / BCRC 17059 / LMG 24140 / F1).